Reading from the N-terminus, the 207-residue chain is Guanylate kinase (207 aa).

Residues 4-184 (GTLYIVSAPS…ALMDFKAILR (181 aa)) form the Guanylate kinase-like domain. 11 to 18 (APSGAGKS) serves as a coordination point for ATP.

This sequence belongs to the guanylate kinase family.

The protein localises to the cytoplasm. The enzyme catalyses GMP + ATP = GDP + ADP. Functionally, essential for recycling GMP and indirectly, cGMP. This Vibrio parahaemolyticus serotype O3:K6 (strain RIMD 2210633) protein is Guanylate kinase.